We begin with the raw amino-acid sequence, 1015 residues long: SPOC domain-containing protein 1 (1015 aa).

Disordered stretches follow at residues 73–97 (MVSP…SPVL), 118–159 (GFSL…EPGG), 213–320 (LYPE…PRLE), and 344–406 (AASS…MTPL). Basic and acidic residues predominate over residues 304-320 (SQDHAEGASKKDFPRLE). A compositionally biased stretch (polar residues) spans 373–382 (AHPTPCQSDP). Basic and acidic residues predominate over residues 388–397 (AEPHQQRAED). Positions 410–530 (VRSTVVRAMQ…IIEQQQKELY (121 aa)) constitute a TFIIS central domain. The interval 643–685 (IQKAPGPAPASSPEVLKVGETPPKEPQDRLQMPAGLKNAPPSP) is disordered. The SPOC domain occupies 688-791 (WEGSLDMFSI…VQQVKMVLLP (104 aa)). Disordered stretches follow at residues 858–906 (PEDR…PGWG) and 967–1015 (QSQD…EHEC). A compositionally biased stretch (polar residues) spans 967-978 (QSQDSLPPSTVV).

Interacts with DNMT3A, DNMT3C and DNMT3L. Interacts with C19orf84 homolog. Interacts with SPIN1; promoting recruitment to transposons marked with histone H3 trimethylated at both 'Lys-4' and 'Lys-9' (H3K4me3K9me3).

Its subcellular location is the nucleus. The protein resides in the chromosome. Protein adapter that acts as an essential executor of PIWIL4-piRNA pathway directed transposon DNA methylation and silencing in the male embryonic germ cells. Recruited to young transposons, which are specifically marked with histone H3 trimethylated at both 'Lys-4' and 'Lys-9' (H3K4me3K9me3), via its association with SPIN1 chromatin reader, and associates with the de novo DNA methylation machinery and repressive chromatin remodeling complexes. Following this, PIWIL4 engages with nascent transposable element transcript to direct piRNA-directed DNA methylation. Not required for piRNA biosynthesis. In Mus musculus (Mouse), this protein is SPOC domain-containing protein 1.